The chain runs to 370 residues: Translocating chain-associated membrane protein 2 (370 aa).

The Cytoplasmic segment spans residues 1 to 22; that stretch reads MAFRRRTKSYPLFSQEFIIHNH. Residues 23-43 traverse the membrane as a helical segment; it reads ADIGFCLVLCVLIGLMFEVTA. Residues 44–75 lie on the Extracellular side of the membrane; the sequence is KTAFLFILPQYNISVPTADSETVHYHYGPKDL. Residue Asn55 is glycosylated (N-linked (GlcNAc...) asparagine). A helical membrane pass occupies residues 76-96; it reads VTILFYVVITIIFHAVVQEYI. Residues 97–119 are Cytoplasmic-facing; it reads LDKISKRLHLSKVKHSKFNESGQ. Residues 112–321 enclose the TLC domain; the sequence is SKFNESGQLL…HSQLRHWREY (210 aa). Residues 120–140 form a helical membrane-spanning segment; it reads LLVFHLSAVAWCFYVIVTEGY. Residues 141–159 lie on the Extracellular side of the membrane; sequence LTNPRSLWEDYPHVYLSFQ. Residues 160–180 form a helical membrane-spanning segment; it reads VKFFYLGQLAYWLHSLPELYF. The Cytoplasmic portion of the chain corresponds to 181-191; it reads QKVRKEEVPRQ. The chain crosses the membrane as a helical span at residues 192–209; sequence LQYICLYLLHITGAYLLN. The Extracellular segment spans residues 210–214; it reads LSRLG. The helical transmembrane segment at 215-235 threads the bilayer; sequence LILLLLQYSTEALFHMARLFH. The Cytoplasmic segment spans residues 236–250; it reads FADENNERLFNAWAA. A helical transmembrane segment spans residues 251–271; sequence VFGVTRLFILTLAVLTIGFGL. The Extracellular segment spans residues 272–287; sequence ARVENQVFDPEKGNFN. The helical transmembrane segment at 288–308 threads the bilayer; it reads TLPCRLGMLLLVCVAQAWLMW. Topologically, residues 309–370 are cytoplasmic; the sequence is RFIHSQLRHW…SSRTKKLKSP (62 aa). The segment at 332–370 is disordered; the sequence is SAVPRPPAKLLKREPGYHENGVVKAENGTSSRTKKLKSP.

Belongs to the TRAM family. As to quaternary structure, interacts with COL1A1. Interacts with SERCA2B.

Its subcellular location is the membrane. Functionally, necessary for collagen type I synthesis. May couple the activity of the ER Ca(2+) pump SERCA2B with the activity of the translocon. This coupling may increase the local Ca(2+) concentration at the site of collagen synthesis, and a high Ca(2+) concentration may be necessary for the function of molecular chaperones involved in collagen folding. Required for proper insertion of the first transmembrane helix N-terminus of TM4SF20 into the ER lumen, may act as a ceramide sensor for regulated alternative translocation (RAT). The chain is Translocating chain-associated membrane protein 2 (Tram2) from Mus musculus (Mouse).